The chain runs to 287 residues: Formamidopyrimidine-DNA glycosylase (287 aa).

P2 serves as the catalytic Schiff-base intermediate with DNA. E3 serves as the catalytic Proton donor. The active-site Proton donor; for beta-elimination activity is the K61. Residues H95, R115, and R157 each coordinate DNA. An FPG-type zinc finger spans residues 243-277 (NVYGRADQPCRRCGEPVRREAFMNRSSFSCPRCQP). R267 serves as the catalytic Proton donor; for delta-elimination activity.

It belongs to the FPG family. In terms of assembly, monomer. It depends on Zn(2+) as a cofactor.

It catalyses the reaction Hydrolysis of DNA containing ring-opened 7-methylguanine residues, releasing 2,6-diamino-4-hydroxy-5-(N-methyl)formamidopyrimidine.. The enzyme catalyses 2'-deoxyribonucleotide-(2'-deoxyribose 5'-phosphate)-2'-deoxyribonucleotide-DNA = a 3'-end 2'-deoxyribonucleotide-(2,3-dehydro-2,3-deoxyribose 5'-phosphate)-DNA + a 5'-end 5'-phospho-2'-deoxyribonucleoside-DNA + H(+). In terms of biological role, involved in base excision repair of DNA damaged by oxidation or by mutagenic agents. Acts as a DNA glycosylase that recognizes and removes damaged bases. Has a preference for oxidized purines, such as 7,8-dihydro-8-oxoguanine (8-oxoG). Has AP (apurinic/apyrimidinic) lyase activity and introduces nicks in the DNA strand. Cleaves the DNA backbone by beta-delta elimination to generate a single-strand break at the site of the removed base with both 3'- and 5'-phosphates. This Salinispora tropica (strain ATCC BAA-916 / DSM 44818 / JCM 13857 / NBRC 105044 / CNB-440) protein is Formamidopyrimidine-DNA glycosylase.